The following is a 477-amino-acid chain: Protein nucleotidyltransferase YdiU (477 aa).

ATP is bound by residues glycine 89, glycine 91, arginine 92, lysine 112, aspartate 124, glycine 125, arginine 178, and arginine 185. Residue aspartate 257 is the Proton acceptor of the active site. Asparagine 258 and aspartate 267 together coordinate Mg(2+). Aspartate 267 is a binding site for ATP.

Belongs to the SELO family. Mg(2+) is required as a cofactor. Requires Mn(2+) as cofactor.

The enzyme catalyses L-seryl-[protein] + ATP = 3-O-(5'-adenylyl)-L-seryl-[protein] + diphosphate. It carries out the reaction L-threonyl-[protein] + ATP = 3-O-(5'-adenylyl)-L-threonyl-[protein] + diphosphate. It catalyses the reaction L-tyrosyl-[protein] + ATP = O-(5'-adenylyl)-L-tyrosyl-[protein] + diphosphate. The catalysed reaction is L-histidyl-[protein] + UTP = N(tele)-(5'-uridylyl)-L-histidyl-[protein] + diphosphate. The enzyme catalyses L-seryl-[protein] + UTP = O-(5'-uridylyl)-L-seryl-[protein] + diphosphate. It carries out the reaction L-tyrosyl-[protein] + UTP = O-(5'-uridylyl)-L-tyrosyl-[protein] + diphosphate. Nucleotidyltransferase involved in the post-translational modification of proteins. It can catalyze the addition of adenosine monophosphate (AMP) or uridine monophosphate (UMP) to a protein, resulting in modifications known as AMPylation and UMPylation. The sequence is that of Protein nucleotidyltransferase YdiU from Synechocystis sp. (strain ATCC 27184 / PCC 6803 / Kazusa).